Here is a 451-residue protein sequence, read N- to C-terminus: CBL-interacting protein kinase 22 (451 aa).

The Protein kinase domain occupies Tyr26–Leu301. ATP-binding positions include Leu32–Val40 and Lys55. The active-site Proton acceptor is Asp165. The interval Asp183–Glu216 is activation loop. Residues Glu330–Gly356 form the NAF domain. The PPI stretch occupies residues Arg361–Val389.

This sequence belongs to the protein kinase superfamily. CAMK Ser/Thr protein kinase family. SNF1 subfamily. It depends on Mn(2+) as a cofactor.

It catalyses the reaction L-seryl-[protein] + ATP = O-phospho-L-seryl-[protein] + ADP + H(+). It carries out the reaction L-threonyl-[protein] + ATP = O-phospho-L-threonyl-[protein] + ADP + H(+). Functionally, CIPK serine-threonine protein kinases interact with CBL proteins. Binding of a CBL protein to the regulatory NAF domain of CIPK protein lead to the activation of the kinase in a calcium-dependent manner. The sequence is that of CBL-interacting protein kinase 22 (CIPK22) from Oryza sativa subsp. japonica (Rice).